Reading from the N-terminus, the 306-residue chain is Peroxisome biogenesis factor 10 (306 aa).

Residues 1-52 (MHLSAHIDPLQIILCTEIDEACIQFIKSQIEGIARACGPRMQANFEGVLIPY) lie on the Peroxisomal matrix side of the membrane. The helical transmembrane segment at 53-84 (VDVLGKFLYRACCLRYATMGEEAARIVLAKQD) threads the bilayer. Residues 85–147 (RSKGLVLATT…PEAVISKEKH (63 aa)) are Cytoplasmic-facing. A helical membrane pass occupies residues 148–174 (LVYILNSFKPILLKLVSIIRFLCLTMK). At 175–202 (GHCATVSQLLLGLKYISLDEINPEEKKK) the chain is on the peroxisomal matrix side. A helical membrane pass occupies residues 203–219 (VLTLLLLLGSRLIASIL). Residues 220–306 (QHSNSYFDQH…SSPSKIILLR (87 aa)) are Cytoplasmic-facing. Zn(2+) is bound by residues C256, C259, C271, H273, C276, C279, C290, and C293. The RING-type zinc-finger motif lies at 256–294 (CSLCMEFIHCPAATECGHIFCWSCINGWTSKKSECPLCR).

The protein belongs to the pex2/pex10/pex12 family. As to quaternary structure, component of the PEX2-PEX10-PEX12 retrotranslocation channel, composed of PEX2, PEX10 and PEX12.

The protein resides in the peroxisome membrane. It catalyses the reaction S-ubiquitinyl-[E2 ubiquitin-conjugating enzyme]-L-cysteine + [acceptor protein]-L-lysine = [E2 ubiquitin-conjugating enzyme]-L-cysteine + N(6)-ubiquitinyl-[acceptor protein]-L-lysine.. It functions in the pathway protein modification; protein ubiquitination. With respect to regulation, the E3 ubiquitin-protein ligase activity is stimulated by PEX12. Functionally, E3 ubiquitin-protein ligase component of a retrotranslocation channel required for peroxisome organization by mediating export of the PEX5 receptor from peroxisomes to the cytosol, thereby promoting PEX5 recycling. The retrotranslocation channel is composed of PEX2, PEX10 and PEX12; each subunit contributing transmembrane segments that coassemble into an open channel that specifically allows the passage of PEX5 through the peroxisomal membrane. PEX10 also regulates PEX5 recycling by acting as a E3 ubiquitin-protein ligase. When PEX5 recycling is compromised, PEX10 catalyzes polyubiquitination of PEX5 during its passage through the retrotranslocation channel, leading to its degradation. This is Peroxisome biogenesis factor 10 (pas4) from Schizosaccharomyces pombe (strain 972 / ATCC 24843) (Fission yeast).